The primary structure comprises 449 residues: Zinc finger and BTB domain-containing protein 14 (449 aa).

In terms of domain architecture, BTB spans 36–102 (CDIAIVVEDV…MYTAKISVKK (67 aa)). Residue Lys-46 forms a Glycyl lysine isopeptide (Lys-Gly) (interchain with G-Cter in SUMO2) linkage. A Nuclear localization signal motif is present at residues 50–66 (HRCVLAACSTYFKKLFK). Residues 156 to 194 (ADAQDDDVEEIGDQDDSPSDDTVEGTPPSQEDGKSPTTT) form a disordered region. Over residues 157–178 (DAQDDDVEEIGDQDDSPSDDTV) the composition is skewed to acidic residues. Residues Lys-203 and Lys-249 each participate in a glycyl lysine isopeptide (Lys-Gly) (interchain with G-Cter in SUMO2) cross-link. 5 C2H2-type zinc fingers span residues 277–304 (IACQACGKTFSDEGRLRKHEKLHTADRP), 305–332 (FVCEMCTKGFTTQAHLKEHLKIHTGYKP), 333–360 (YSCEVCGKSFIRAPDLKKHERVHSNERP), 361–388 (FACHMCDKAFKHKSHLKDHERRHRGEKP), and 389–417 (FVCGSCTKAFAKASDLKRHENNMHSERKQ). Residues 405 to 417 (KRHENNMHSERKQ) show a composition bias toward basic and acidic residues. A disordered region spans residues 405-424 (KRHENNMHSERKQVTPSAIQ).

The protein belongs to the krueppel C2H2-type zinc-finger protein family. As to quaternary structure, interacts with ZBTB21. In terms of tissue distribution, ubiquitous.

The protein localises to the nucleus. Its function is as follows. Transcriptional activator of the dopamine transporter (DAT), binding it's promoter at the consensus sequence 5'-CCTGCACAGTTCACGGA-3'. Binds to 5'-d(GCC)(n)-3' trinucleotide repeats in promoter regions and acts as a repressor of the FMR1 gene. Transcriptional repressor of MYC and thymidine kinase promoters. This Mus musculus (Mouse) protein is Zinc finger and BTB domain-containing protein 14 (Zbtb14).